Reading from the N-terminus, the 219-residue chain is 2-hydroxy-3-keto-5-methylthiopentenyl-1-phosphate phosphatase (219 aa).

The protein belongs to the HAD-like hydrolase superfamily. MtnX family.

The catalysed reaction is 2-hydroxy-5-methylsulfanyl-3-oxopent-1-enyl phosphate + H2O = 1,2-dihydroxy-5-(methylsulfanyl)pent-1-en-3-one + phosphate. It functions in the pathway amino-acid biosynthesis; L-methionine biosynthesis via salvage pathway; L-methionine from S-methyl-5-thio-alpha-D-ribose 1-phosphate: step 4/6. Dephosphorylates 2-hydroxy-3-keto-5-methylthiopentenyl-1-phosphate (HK-MTPenyl-1-P) yielding 1,2-dihydroxy-3-keto-5-methylthiopentene (DHK-MTPene). The chain is 2-hydroxy-3-keto-5-methylthiopentenyl-1-phosphate phosphatase from Bacillus cereus (strain G9842).